Reading from the N-terminus, the 156-residue chain is Small ribosomal subunit protein uS7 (156 aa).

Belongs to the universal ribosomal protein uS7 family. In terms of assembly, part of the 30S ribosomal subunit. Contacts proteins S9 and S11.

Its function is as follows. One of the primary rRNA binding proteins, it binds directly to 16S rRNA where it nucleates assembly of the head domain of the 30S subunit. Is located at the subunit interface close to the decoding center, probably blocks exit of the E-site tRNA. In Streptococcus equi subsp. equi (strain 4047), this protein is Small ribosomal subunit protein uS7.